Here is a 622-residue protein sequence, read N- to C-terminus: Chaperone protein HtpG (622 aa).

Positions 1–322 are a; substrate-binding; sequence MTEAKNYEFQ…SEDLPLNISR (322 aa). Residues 323-539 are b; sequence QSLQDNALVS…DGFMSASMER (217 aa). The c stretch occupies residues 540-622; sequence VLAASRKEQG…KILDRAVSRA (83 aa).

Belongs to the heat shock protein 90 family. As to quaternary structure, homodimer.

Its subcellular location is the cytoplasm. Its function is as follows. Molecular chaperone. Has ATPase activity. This is Chaperone protein HtpG from Desulfotalea psychrophila (strain LSv54 / DSM 12343).